Reading from the N-terminus, the 118-residue chain is MLRTVLLSKIHRATVTGACLEYMGSISLDAQLLAAAHILAFEQVHVVNLNNGARLITYAIEATAGSGAVVLNGAAARLAAPGDRVIVLAYGQGTTEELENHQPRVVHVDTGNRIVACV.

Ser-25 acts as the Schiff-base intermediate with substrate; via pyruvic acid in catalysis. Ser-25 carries the pyruvic acid (Ser) modification. A substrate-binding site is contributed by Thr-57. Tyr-58 serves as the catalytic Proton donor. 73-75 (GAA) lines the substrate pocket.

The protein belongs to the PanD family. In terms of assembly, heterooctamer of four alpha and four beta subunits. Pyruvate is required as a cofactor. In terms of processing, is synthesized initially as an inactive proenzyme, which is activated by self-cleavage at a specific serine bond to produce a beta-subunit with a hydroxyl group at its C-terminus and an alpha-subunit with a pyruvoyl group at its N-terminus.

It is found in the cytoplasm. The enzyme catalyses L-aspartate + H(+) = beta-alanine + CO2. The protein operates within cofactor biosynthesis; (R)-pantothenate biosynthesis; beta-alanine from L-aspartate: step 1/1. Its function is as follows. Catalyzes the pyruvoyl-dependent decarboxylation of aspartate to produce beta-alanine. This is Aspartate 1-decarboxylase 1 from Gloeobacter violaceus (strain ATCC 29082 / PCC 7421).